Here is a 214-residue protein sequence, read N- to C-terminus: ATP phosphoribosyltransferase (214 aa).

It belongs to the ATP phosphoribosyltransferase family. Short subfamily. In terms of assembly, heteromultimer composed of HisG and HisZ subunits.

The protein localises to the cytoplasm. It catalyses the reaction 1-(5-phospho-beta-D-ribosyl)-ATP + diphosphate = 5-phospho-alpha-D-ribose 1-diphosphate + ATP. The protein operates within amino-acid biosynthesis; L-histidine biosynthesis; L-histidine from 5-phospho-alpha-D-ribose 1-diphosphate: step 1/9. Catalyzes the condensation of ATP and 5-phosphoribose 1-diphosphate to form N'-(5'-phosphoribosyl)-ATP (PR-ATP). Has a crucial role in the pathway because the rate of histidine biosynthesis seems to be controlled primarily by regulation of HisG enzymatic activity. This chain is ATP phosphoribosyltransferase, found in Lysinibacillus sphaericus (strain C3-41).